The primary structure comprises 267 residues: Thiamine thiazole synthase (267 aa).

NAD(+) is bound by residues S41, 60 to 61, G68, V132, and 160 to 162; these read ER and HVD. Positions 162 and 177 each coordinate Fe cation. M227 lines the NAD(+) pocket. Residue R237 coordinates glycine.

The protein belongs to the THI4 family. Homooctamer; tetramer of dimers. Fe(2+) serves as cofactor.

The enzyme catalyses hydrogen sulfide + glycine + NAD(+) = ADP-5-ethyl-4-methylthiazole-2-carboxylate + nicotinamide + 3 H2O + H(+). The protein operates within cofactor biosynthesis; thiamine diphosphate biosynthesis. Involved in the biosynthesis of the thiazole moiety of thiamine. Catalyzes the conversion of NAD and glycine to adenosine diphosphate 5-(2-hydroxyethyl)-4-methylthiazole-2-carboxylate (ADT), an adenylated thiazole intermediate, using free sulfide as a source of sulfur. The protein is Thiamine thiazole synthase of Saccharolobus islandicus (strain Y.N.15.51 / Yellowstone #2) (Sulfolobus islandicus).